The sequence spans 274 residues: E3 ubiquitin-protein ligase complex SLX5-SLX8 subunit SLX8 (274 aa).

Disordered regions lie at residues 1–117 and 136–159; these read MARR…GNNI and ANTPSASPMLDAAPPTTKPGTNSK. Positions 13–28 are enriched in basic and acidic residues; the sequence is ENLRIKRVRLESVRQN. The residue at position 50 (Ser-50) is a Phosphoserine. Phosphothreonine is present on Thr-66. Positions 66-75 are enriched in acidic residues; that stretch reads TSEEDGDDDL. Phosphoserine is present on Ser-67. A compositionally biased stretch (basic and acidic residues) spans 97–108; the sequence is GNHDRETMHTEE. An RING-type zinc finger spans residues 206 to 250; it reads CPICFEPPETALMTLCGHVFCCPCLFQMVNSSRTCRQFGHCALCR.

As to quaternary structure, component of the heterodimeric SUMO-targeted ubiquitin ligase (STUbL) complex composed of SLX5 and SLX8.

It is found in the nucleus. Its subcellular location is the chromosome. The protein resides in the centromere. It localises to the kinetochore. It catalyses the reaction S-ubiquitinyl-[E2 ubiquitin-conjugating enzyme]-L-cysteine + [acceptor protein]-L-lysine = [E2 ubiquitin-conjugating enzyme]-L-cysteine + N(6)-ubiquitinyl-[acceptor protein]-L-lysine.. Its pathway is protein modification; protein ubiquitination. Functionally, component of the SUMO-targeted ubiquitin ligase (STUbL) complex SLX5/SLX8 that mediates ubiquitination and subsequent desumoylation of sumoylated proteins and proteins containing SUMO-like domains for their degradation. The STUbL complex SLX5/SLX8 stimulates ubiquitin conjugating enzymes, including UBC1, UBC4, UBC5 and UBC13-MMS2, and mediates the proteolytic down-regulation of sumoylated proteins. The STUbL complex SLX5/SLX8 is involved in ubiquitin-mediated degradation of histone variant CSE4, preventing mislocalization to euchromatin. The complex plays an essential role in maintenance of chromosome stability and links SUMO-dependent ubiquitination to a centromere-specific function during mitosis. The complex is involved in proteolysis of spindle positioning protein KAR9 and ensures correct spindle function by regulating levels of microtubule-associated proteins. During replication, the complex helps to prevent DNA lesions via recombination and has a role in localizing the DNA damage protein DCD2. The complex especially ubiquitinates the nuclease YEN1 and prevents persistent accumulation of a fraction of YEN1 associated with sites of activity in late G2/M and helps maintain the balance between pro- and anti-crossover pathways during homologous recombination. It is also involved in ubiquitin-mediated degradation of DNA repair proteins RAD52 and RAD57. Finally, the complex is recruited to distinct genomic hotspots of non-H2B protein ubiquitination (ub-hotspots) by the sumoylated transcription factor-like protein EUC1 where it ubiquitinates EUC1 and presumably other targets. In Saccharomyces cerevisiae (strain ATCC 204508 / S288c) (Baker's yeast), this protein is E3 ubiquitin-protein ligase complex SLX5-SLX8 subunit SLX8 (SLX8).